A 95-amino-acid polypeptide reads, in one-letter code: Aspartyl/glutamyl-tRNA(Asn/Gln) amidotransferase subunit C (95 aa).

The protein belongs to the GatC family. Heterotrimer of A, B and C subunits.

The enzyme catalyses L-glutamyl-tRNA(Gln) + L-glutamine + ATP + H2O = L-glutaminyl-tRNA(Gln) + L-glutamate + ADP + phosphate + H(+). It catalyses the reaction L-aspartyl-tRNA(Asn) + L-glutamine + ATP + H2O = L-asparaginyl-tRNA(Asn) + L-glutamate + ADP + phosphate + 2 H(+). Functionally, allows the formation of correctly charged Asn-tRNA(Asn) or Gln-tRNA(Gln) through the transamidation of misacylated Asp-tRNA(Asn) or Glu-tRNA(Gln) in organisms which lack either or both of asparaginyl-tRNA or glutaminyl-tRNA synthetases. The reaction takes place in the presence of glutamine and ATP through an activated phospho-Asp-tRNA(Asn) or phospho-Glu-tRNA(Gln). This is Aspartyl/glutamyl-tRNA(Asn/Gln) amidotransferase subunit C from Pseudomonas paraeruginosa (strain DSM 24068 / PA7) (Pseudomonas aeruginosa (strain PA7)).